The primary structure comprises 426 residues: Serine--tRNA ligase (426 aa).

Thr233 to Glu235 serves as a coordination point for L-serine. Arg264–Glu266 is an ATP binding site. Residue Glu287 participates in L-serine binding. Glu351–Ser354 lines the ATP pocket. L-serine is bound at residue Ser387.

Belongs to the class-II aminoacyl-tRNA synthetase family. Type-1 seryl-tRNA synthetase subfamily. As to quaternary structure, homodimer. The tRNA molecule binds across the dimer.

The protein localises to the cytoplasm. It catalyses the reaction tRNA(Ser) + L-serine + ATP = L-seryl-tRNA(Ser) + AMP + diphosphate + H(+). The enzyme catalyses tRNA(Sec) + L-serine + ATP = L-seryl-tRNA(Sec) + AMP + diphosphate + H(+). It participates in aminoacyl-tRNA biosynthesis; selenocysteinyl-tRNA(Sec) biosynthesis; L-seryl-tRNA(Sec) from L-serine and tRNA(Sec): step 1/1. Its function is as follows. Catalyzes the attachment of serine to tRNA(Ser). Is also able to aminoacylate tRNA(Sec) with serine, to form the misacylated tRNA L-seryl-tRNA(Sec), which will be further converted into selenocysteinyl-tRNA(Sec). The polypeptide is Serine--tRNA ligase (Clostridium botulinum (strain Langeland / NCTC 10281 / Type F)).